The following is a 245-amino-acid chain: tRNA1(Val) (adenine(37)-N6)-methyltransferase (245 aa).

It belongs to the methyltransferase superfamily. tRNA (adenine-N(6)-)-methyltransferase family.

It localises to the cytoplasm. It carries out the reaction adenosine(37) in tRNA1(Val) + S-adenosyl-L-methionine = N(6)-methyladenosine(37) in tRNA1(Val) + S-adenosyl-L-homocysteine + H(+). Functionally, specifically methylates the adenine in position 37 of tRNA(1)(Val) (anticodon cmo5UAC). The sequence is that of tRNA1(Val) (adenine(37)-N6)-methyltransferase from Shigella dysenteriae serotype 1 (strain Sd197).